The sequence spans 111 residues: UPF0060 membrane protein HCH_03337 (111 aa).

Transmembrane regions (helical) follow at residues 8–28 (LLFA…WLVI), 33–53 (SLWL…LLTL), 65–85 (YGGM…GVGL), and 88–108 (FDFL…LQPI).

Belongs to the UPF0060 family.

It is found in the cell inner membrane. This chain is UPF0060 membrane protein HCH_03337, found in Hahella chejuensis (strain KCTC 2396).